The following is a 365-amino-acid chain: 4-hydroxy-3-methylbut-2-en-1-yl diphosphate synthase (flavodoxin) (365 aa).

Residues Cys-270, Cys-273, Cys-305, and Glu-312 each contribute to the [4Fe-4S] cluster site.

The protein belongs to the IspG family. It depends on [4Fe-4S] cluster as a cofactor.

The catalysed reaction is (2E)-4-hydroxy-3-methylbut-2-enyl diphosphate + 2 oxidized [2Fe-2S]-[ferredoxin] + H2O = 2-C-methyl-D-erythritol 2,4-cyclic diphosphate + 2 reduced [2Fe-2S]-[ferredoxin] + H(+). The enzyme catalyses (2E)-4-hydroxy-3-methylbut-2-enyl diphosphate + oxidized [flavodoxin] + H2O + 2 H(+) = 2-C-methyl-D-erythritol 2,4-cyclic diphosphate + reduced [flavodoxin]. The protein operates within isoprenoid biosynthesis; isopentenyl diphosphate biosynthesis via DXP pathway; isopentenyl diphosphate from 1-deoxy-D-xylulose 5-phosphate: step 5/6. In terms of biological role, converts 2C-methyl-D-erythritol 2,4-cyclodiphosphate (ME-2,4cPP) into 1-hydroxy-2-methyl-2-(E)-butenyl 4-diphosphate. Involved in density-dependent regulation of 2'-N-acetyltransferase. This is 4-hydroxy-3-methylbut-2-en-1-yl diphosphate synthase (flavodoxin) from Providencia stuartii.